We begin with the raw amino-acid sequence, 364 residues long: Formate dehydrogenase (364 aa).

Substrate is bound by residues Val93 and Asn119. NAD(+)-binding positions include 174-175 (RI), Asp195, 230-234 (PLHAG), Thr256, Asp282, and 311-314 (HYSG).

Belongs to the D-isomer specific 2-hydroxyacid dehydrogenase family. FDH subfamily. As to quaternary structure, homodimer.

It localises to the cytoplasm. It carries out the reaction formate + NAD(+) = CO2 + NADH. Cu(2+), Hg and p-chloromercuribenzoate are strong inhibitors of enzyme activity and Ca(2+), Mg(2+), Zn(2+), Mn(2+), Cd(2+) and Sn(2+) have no effect on activity indicating a cysteine residue in the protein is essential for enzyme activity or to maintain the proper structure of the enzyme. Nitrite and nitrate inhibit some enzyme activity, however cyanide, azide, thiocyanate and cyanate are strong inhibitors of the enzymatic reaction. The inhibition of cyanide is competitive with formate and reversible. Functionally, catalyzes the NAD(+)-dependent oxidation of formate to carbon dioxide. Formate oxidation is the final step in the methanol oxidation pathway in methylotrophic microorganisms. Has a role in the detoxification of exogenous formate in non-methylotrophic organisms. This chain is Formate dehydrogenase, found in Candida boidinii (Yeast).